The chain runs to 284 residues: MKKIAIFAKVHDPRCQGVASELIAWLEARGLIPLVEAHLARHLGGRQGIVPEDIPVLADMAVVLGGDGTLISAARLIGSRQIPILGVNLGSLGFLTEITLDELYPVLESCLSGDFQVTERMMLTVSVERNGEEICSHRVLNDVVINKGALARIIDMETEVSGIRLTTYKADGLIISTPTGSTGYSLSANGPIVHPSLECITITPICPHTLTNRPIVLESSSGVTVWLRSKDEDVYLTLDGQVGMELKCGDAVHVRRAAHRTRLVMSRSRNYFEVLRTKLKWGER.

D67 serves as the catalytic Proton acceptor. Residues 67–68 (DG), 141–142 (ND), R152, K169, D171, 182–187 (TGYSLS), and Q241 each bind NAD(+).

The protein belongs to the NAD kinase family. Requires a divalent metal cation as cofactor.

The protein resides in the cytoplasm. The catalysed reaction is NAD(+) + ATP = ADP + NADP(+) + H(+). Involved in the regulation of the intracellular balance of NAD and NADP, and is a key enzyme in the biosynthesis of NADP. Catalyzes specifically the phosphorylation on 2'-hydroxyl of the adenosine moiety of NAD to yield NADP. This chain is NAD kinase, found in Geobacter sulfurreducens (strain ATCC 51573 / DSM 12127 / PCA).